Reading from the N-terminus, the 321-residue chain is ATP-dependent 6-phosphofructokinase (321 aa).

Gly12 serves as a coordination point for ATP. ADP contacts are provided by residues 22-26 (RGVVR) and 55-60 (RYSVSD). ATP is bound by residues 73 to 74 (RF) and 103 to 106 (GDGS). Asp104 provides a ligand contact to Mg(2+). Position 127 to 129 (127 to 129 (TID)) interacts with substrate. Asp129 acts as the Proton acceptor in catalysis. Residue Arg156 participates in ADP binding. Substrate is bound by residues Arg164 and 171–173 (MGR). ADP is bound by residues 187 to 189 (GCE) and 215 to 217 (KRH). Residues Glu224, Arg245, and 251–254 (HVQR) each bind substrate.

Belongs to the phosphofructokinase type A (PFKA) family. ATP-dependent PFK group I subfamily. Prokaryotic clade 'B1' sub-subfamily. In terms of assembly, homotetramer. Requires Mg(2+) as cofactor.

The protein localises to the cytoplasm. It catalyses the reaction beta-D-fructose 6-phosphate + ATP = beta-D-fructose 1,6-bisphosphate + ADP + H(+). The protein operates within carbohydrate degradation; glycolysis; D-glyceraldehyde 3-phosphate and glycerone phosphate from D-glucose: step 3/4. Its activity is regulated as follows. Allosterically activated by ADP and other diphosphonucleosides, and allosterically inhibited by phosphoenolpyruvate. In terms of biological role, catalyzes the phosphorylation of D-fructose 6-phosphate to fructose 1,6-bisphosphate by ATP, the first committing step of glycolysis. The sequence is that of ATP-dependent 6-phosphofructokinase from Mannheimia succiniciproducens (strain KCTC 0769BP / MBEL55E).